Here is a 601-residue protein sequence, read N- to C-terminus: Elongation factor 4 (601 aa).

The tr-type G domain maps to 5–188; that stretch reads SHIRNFAIIA…ALVLRLPPPT (184 aa). GTP contacts are provided by residues 17 to 22 and 135 to 138; these read DHGKST and NKID.

It belongs to the TRAFAC class translation factor GTPase superfamily. Classic translation factor GTPase family. LepA subfamily.

Its subcellular location is the cell inner membrane. It carries out the reaction GTP + H2O = GDP + phosphate + H(+). In terms of biological role, required for accurate and efficient protein synthesis under certain stress conditions. May act as a fidelity factor of the translation reaction, by catalyzing a one-codon backward translocation of tRNAs on improperly translocated ribosomes. Back-translocation proceeds from a post-translocation (POST) complex to a pre-translocation (PRE) complex, thus giving elongation factor G a second chance to translocate the tRNAs correctly. Binds to ribosomes in a GTP-dependent manner. This is Elongation factor 4 from Rhodospirillum rubrum (strain ATCC 11170 / ATH 1.1.1 / DSM 467 / LMG 4362 / NCIMB 8255 / S1).